We begin with the raw amino-acid sequence, 350 residues long: Opsin, longwave 563 nm (350 aa).

At 1–45 (HRLAGRHPQDNYEDSTQSSIFTYTNSNSTRGPFEGPNYHIAPRWV) the chain is on the extracellular side. Asparagine 27 carries N-linked (GlcNAc...) asparagine glycosylation. The chain crosses the membrane as a helical span at residues 46–70 (YHLTSVWMLFVVVASVFTNGLVLAA). Topologically, residues 71–82 (TMKFKKLRHPLN) are cytoplasmic. The chain crosses the membrane as a helical span at residues 83–108 (WILVNLAIADLAETVIASTISVVNQV). Residues 109-122 (HGYFVLGHPMCVLE) lie on the Extracellular side of the membrane. A disulfide bridge links cysteine 119 with cysteine 196. A helical transmembrane segment spans residues 123–142 (GYTVSLCGITGLWSLAIISW). At 143–161 (ERWLVVCKPFGNVRFDAKL) the chain is on the cytoplasmic side. A helical membrane pass occupies residues 162–185 (AIVGVAFSWIWSAVWTAPPIFGWS). The Extracellular portion of the chain corresponds to 186–211 (RYWPHGLKTSCGPDVFSGSSYPGVQS). A helical membrane pass occupies residues 212-239 (YMIVLMITCCFLPLGIIVLCYLQVWLAI). Over 240–261 (RAVAKQQKESESTQKAEKEVTR) the chain is Cytoplasmic. Residues 262-285 (MVVVMIVAYCVCWGPYTFFACFAA) traverse the membrane as a helical segment. Residues 286–293 (ANPGYAFH) lie on the Extracellular side of the membrane. Residues 294-318 (PLMAALPAYFAKSATIYNPIIYVFM) form a helical membrane-spanning segment. Lysine 305 bears the N6-(retinylidene)lysine mark. Over 319 to 350 (NRQFRNCILQLFGKKVDDGSELSSASKTEVSS) the chain is Cytoplasmic.

Belongs to the G-protein coupled receptor 1 family. Opsin subfamily. In terms of processing, phosphorylated on some or all of the serine and threonine residues present in the C-terminal region. In terms of tissue distribution, the color pigments are found in the cone photoreceptor cells.

It is found in the membrane. Its function is as follows. Visual pigments are the light-absorbing molecules that mediate vision. They consist of an apoprotein, opsin, covalently linked to cis-retinal. The polypeptide is Opsin, longwave 563 nm (Callithrix jacchus (White-tufted-ear marmoset)).